The chain runs to 294 residues: Ferredoxin--NADP reductase (294 aa).

One can recognise an FAD-binding FR-type domain in the interval 13 to 137; that stretch reads KNPYIGKCLS…TGPVGKEMLL (125 aa). Residues 72–75, 93–95, tyrosine 99, 111–113, and threonine 152 each bind FAD; these read RLYS, CVR, and VCS. NADP(+) contacts are provided by serine 75 and arginine 95. Residues threonine 152, 184-185, 214-215, lysine 224, 224-228, 253-254, and glutamate 292 contribute to the NADP(+) site; these read IP, SR, KMYIQ, and GL.

Belongs to the ferredoxin--NADP reductase type 1 family. It depends on FAD as a cofactor.

It is found in the cellular thylakoid membrane. It catalyses the reaction 2 reduced [2Fe-2S]-[ferredoxin] + NADP(+) + H(+) = 2 oxidized [2Fe-2S]-[ferredoxin] + NADPH. The protein is Ferredoxin--NADP reductase (petH) of Spirulina sp.